A 220-amino-acid chain; its full sequence is U1 small nuclear ribonucleoprotein C (220 aa).

A Matrin-type zinc finger spans residues 4–36 (FFCDYCDVYLTHDSISVRKAHNSGRNHLRNVVD). The segment at 197-220 (PLGGFPAGAPLPGAPPGYGPPGAK) is disordered. A compositionally biased stretch (pro residues) spans 208 to 220 (PGAPPGYGPPGAK).

Belongs to the U1 small nuclear ribonucleoprotein C family. In terms of assembly, U1 snRNP is composed of the 7 core Sm proteins B/B', D1, D2, D3, E, F and G that assemble in a heptameric protein ring on the Sm site of the small nuclear RNA to form the core snRNP, and at least 3 U1 snRNP-specific proteins U1-70K, U1-A and U1-C. U1-C interacts with U1 snRNA and the 5' splice-site region of the pre-mRNA.

It localises to the nucleus. In terms of biological role, component of the spliceosomal U1 snRNP, which is essential for recognition of the pre-mRNA 5' splice-site and the subsequent assembly of the spliceosome. U1-C is directly involved in initial 5' splice-site recognition for both constitutive and regulated alternative splicing. The interaction with the 5' splice-site seems to precede base-pairing between the pre-mRNA and the U1 snRNA. Stimulates commitment or early (E) complex formation by stabilizing the base pairing of the 5' end of the U1 snRNA and the 5' splice-site region. This is U1 small nuclear ribonucleoprotein C from Tuber melanosporum (strain Mel28) (Perigord black truffle).